Here is a 312-residue protein sequence, read N- to C-terminus: Phosphatidate cytidylyltransferase (312 aa).

A disordered region spans residues 1 to 31; the sequence is MASTDPGTGTPLDESVPGIKRAMRQSTKNTP. A run of 8 helical transmembrane segments spans residues 37–57, 58–78, 85–105, 110–130, 157–177, 186–206, 223–243, and 247–267; these read LPAA…TLVF, APRI…HEVV, GYVI…WLTW, VGAL…RLVM, ATVF…LLVY, FCLM…GVLF, GFAG…TFLA, and PWVG…GDLV.

Belongs to the CDS family.

It is found in the cell membrane. The catalysed reaction is a 1,2-diacyl-sn-glycero-3-phosphate + CTP + H(+) = a CDP-1,2-diacyl-sn-glycerol + diphosphate. It functions in the pathway phospholipid metabolism; CDP-diacylglycerol biosynthesis; CDP-diacylglycerol from sn-glycerol 3-phosphate: step 3/3. This Mycobacterium leprae (strain TN) protein is Phosphatidate cytidylyltransferase (cdsA).